The following is a 21-amino-acid chain: Preblooming protein 2 (21 aa).

Possible mediator for cell division in the blooming process. The polypeptide is Preblooming protein 2 (Prorocentrum triestinum (Red tide alga)).